A 709-amino-acid chain; its full sequence is Putative extracellular sulfatase Sulf-1 homolog (709 aa).

A signal peptide spans 1-27 (MISNLRISNYFIIFYVLFLIIPIKVTS). 3 residues coordinate Ca(2+): D43, D44, and C79. C79 acts as the Nucleophile in catalysis. C79 is subject to 3-oxoalanine (Cys). N103, N162, and N189 each carry an N-linked (GlcNAc...) asparagine glycan. The Ca(2+) site is built by D308 and H309. N344, N468, N500, N540, N566, N610, and N620 each carry an N-linked (GlcNAc...) asparagine glycan.

Belongs to the sulfatase family. The cofactor is Ca(2+). Post-translationally, the conversion to 3-oxoalanine (also known as C-formylglycine, FGly), of a serine or cysteine residue in prokaryotes and of a cysteine residue in eukaryotes, is critical for catalytic activity.

It is found in the endoplasmic reticulum. It localises to the golgi apparatus. Its subcellular location is the golgi stack. The protein localises to the cell surface. The protein is Putative extracellular sulfatase Sulf-1 homolog (sul-1) of Caenorhabditis elegans.